The following is a 499-amino-acid chain: Cytochrome P450 monooxygenase notH' (499 aa).

A helical membrane pass occupies residues 11 to 31 (LGLEPAGWALALLTSSIIYLF). N-linked (GlcNAc...) asparagine glycosylation is found at asparagine 296 and asparagine 427. Cysteine 440 provides a ligand contact to heme.

The protein belongs to the cytochrome P450 family. It depends on heme as a cofactor.

Its subcellular location is the membrane. It functions in the pathway alkaloid biosynthesis. Its function is as follows. Cytochrome P450 monooxygenase; part of the gene cluster that mediates the biosynthesis of notoamide, a fungal indole alkaloid that belongs to a family of natural products containing a characteristic bicyclo[2.2.2]diazaoctane core. The first step of notoamide biosynthesis involves coupling of L-proline and L-tryptophan by the bimodular NRPS notE', to produce cyclo-L-tryptophan-L-proline called brevianamide F. The reverse prenyltransferase notF' then acts as a deoxybrevianamide E synthase and converts brevianamide F to deoxybrevianamide E via reverse prenylation at C-2 of the indole ring leading to the bicyclo[2.2.2]diazaoctane core. Deoxybrevianamide E is further hydroxylated at C-6 of the indole ring, likely catalyzed by the cytochrome P450 monooxygenase notG', to yield 6-hydroxy-deoxybrevianamide E. 6-hydroxy-deoxybrevianamide E is a specific substrate of the prenyltransferase notC' for normal prenylation at C-7 to produce 6-hydroxy-7-prenyl-deoxybrevianamide, also called notoamide S. As the proposed pivotal branching point in notoamide biosynthesis, notoamide S can be diverted to notoamide E through an oxidative pyran ring closure putatively catalyzed by either notH' cytochrome P450 monooxygenase or the notD' FAD-linked oxidoreductase. This step would be followed by an indole 2,3-epoxidation-initiated pinacol-like rearrangement catalyzed by the notB' FAD-dependent monooxygenase leading to the formation of notoamide C and notoamide D. On the other hand notoamide S is converted to notoamide T by notH' (or notD'), a bifunctional oxidase that also functions as the intramolecular Diels-Alderase responsible for generation of (-)-notoamide T. To generate antipodal (+)-notoaminide T, notH (or notD) in Aspergillus strain MF297-2 is expected to catalyze a Diels-Alder reaction leading to the opposite stereochemistry. The remaining oxidoreductase notD' (or notH') likely catalyzes the oxidative pyran ring formation to yield (-)-stephacidin A. The FAD-dependent monooxygenase notI' is highly similar to notB' and is predicted to catalyze a similar conversion from (-)-stephacidin A to (+)-notoamide B via the 2,3-epoxidation of (-)-stephacidin A followed by a pinacol-type rearrangement. Finally, it remains unclear which enzyme could be responsible for the final hydroxylation steps leading to notoamide A and sclerotiamide. In Aspergillus versicolor, this protein is Cytochrome P450 monooxygenase notH'.